The sequence spans 276 residues: Formamidopyrimidine-DNA glycosylase (276 aa).

The Schiff-base intermediate with DNA role is filled by P2. Residue E3 is the Proton donor of the active site. K58 functions as the Proton donor; for beta-elimination activity in the catalytic mechanism. DNA-binding residues include H92, R111, and K154. Residues 239 to 273 (QVYGHAGEECNNCGTILEKIKVNGRGTTFCPHCQV) form an FPG-type zinc finger. R263 serves as the catalytic Proton donor; for delta-elimination activity.

The protein belongs to the FPG family. In terms of assembly, monomer. Requires Zn(2+) as cofactor.

It catalyses the reaction Hydrolysis of DNA containing ring-opened 7-methylguanine residues, releasing 2,6-diamino-4-hydroxy-5-(N-methyl)formamidopyrimidine.. It carries out the reaction 2'-deoxyribonucleotide-(2'-deoxyribose 5'-phosphate)-2'-deoxyribonucleotide-DNA = a 3'-end 2'-deoxyribonucleotide-(2,3-dehydro-2,3-deoxyribose 5'-phosphate)-DNA + a 5'-end 5'-phospho-2'-deoxyribonucleoside-DNA + H(+). Functionally, involved in base excision repair of DNA damaged by oxidation or by mutagenic agents. Acts as a DNA glycosylase that recognizes and removes damaged bases. Has a preference for oxidized purines, such as 7,8-dihydro-8-oxoguanine (8-oxoG). Has AP (apurinic/apyrimidinic) lyase activity and introduces nicks in the DNA strand. Cleaves the DNA backbone by beta-delta elimination to generate a single-strand break at the site of the removed base with both 3'- and 5'-phosphates. This Lactobacillus johnsonii (strain CNCM I-12250 / La1 / NCC 533) protein is Formamidopyrimidine-DNA glycosylase.